An 882-amino-acid polypeptide reads, in one-letter code: Valine--tRNA ligase (882 aa).

A 'HIGH' region motif is present at residues 45–55 (PNVTGKLHLGH). The short motif at 519-523 (KMSKS) is the 'KMSKS' region element. Residue Lys-522 coordinates ATP. A coiled-coil region spans residues 808–882 (LADLLNVEEE…RIAEMQKLVK (75 aa)).

The protein belongs to the class-I aminoacyl-tRNA synthetase family. ValS type 1 subfamily. Monomer.

Its subcellular location is the cytoplasm. The enzyme catalyses tRNA(Val) + L-valine + ATP = L-valyl-tRNA(Val) + AMP + diphosphate. Catalyzes the attachment of valine to tRNA(Val). As ValRS can inadvertently accommodate and process structurally similar amino acids such as threonine, to avoid such errors, it has a 'posttransfer' editing activity that hydrolyzes mischarged Thr-tRNA(Val) in a tRNA-dependent manner. The sequence is that of Valine--tRNA ligase from Streptococcus pyogenes serotype M3 (strain ATCC BAA-595 / MGAS315).